Here is a 61-residue protein sequence, read N- to C-terminus: UPF0434 protein TM1040_0056 (61 aa).

The protein belongs to the UPF0434 family.

This chain is UPF0434 protein TM1040_0056, found in Ruegeria sp. (strain TM1040) (Silicibacter sp.).